Reading from the N-terminus, the 402-residue chain is Peptidyl-prolyl cis-trans isomerase FKBP8 (402 aa).

The span at 28-39 (DGVDDAEEEDDL) shows a compositional bias: acidic residues. Residues 28–54 (DGVDDAEEEDDLSGLPPLEDMGQPTVE) form a disordered region. The region spanning 110-194 (GQVVTVHLQM…CLEVTLKTAE (85 aa)) is the PPIase FKBP-type domain. Residues 211 to 244 (ANRKRECGNAHYQRADFVLAANSYDLAIKAITSN) form a TPR 1 repeat. Glycyl lysine isopeptide (Lys-Gly) (interchain with G-Cter in ubiquitin) cross-links involve residues Lys-239, Lys-261, Lys-263, and Lys-274. TPR repeat units follow at residues 262 to 295 (VKCL…QPDN) and 296 to 329 (IKAL…EPSN). Ser-286 carries the post-translational modification Phosphoserine. Residues Lys-297, Lys-304, Lys-324, Lys-330, Lys-338, Lys-341, and Lys-342 each participate in a glycyl lysine isopeptide (Lys-Gly) (interchain with G-Cter in ubiquitin) cross-link. The helical transmembrane segment at 380-400 (WLFGATAVALGGVALSVVIAA) threads the bilayer.

As to quaternary structure, homomultimers or heteromultimers (Potential). Forms heterodimer with calmodulin. When activated by calmodulin and calcium, interacts with the BH4 domain of BCL2 and weakly with BCLX isoform Bcl-X(L). Does not bind and inhibit calcineurin. Interacts with ZFYVE27; may negatively regulate ZFYVE27 phosphorylation. Requires Ca(2+) as cofactor. Ubiquitinated by PRKN during mitophagy, leading to its degradation and enhancement of mitophagy. Deubiquitinated by USP30. As to expression, detected throughout the embryonic body, in caudal neural tube, limbs and head. Detected in adult retina, brain, heart, kidney, liver, pancreas, lung, testis and urinary bladder (at protein level). Detected in adult brain, kidney, liver, testis and trigeminal nerve, and in embryo. Detected at lower levels in lung, spleen, heart and ovary. Widely expressed in forebrain. Detected in the Purkinje cell layer in the cerebellum and in hippocampus neurons.

It is found in the mitochondrion membrane. It carries out the reaction [protein]-peptidylproline (omega=180) = [protein]-peptidylproline (omega=0). Its function is as follows. Constitutively inactive PPiase, which becomes active when bound to calmodulin and calcium. Seems to act as a chaperone for BCL2, targets it to the mitochondria and modulates its phosphorylation state. The BCL2/FKBP8/calmodulin/calcium complex probably interferes with the binding of BCL2 to its targets. The active form of FKBP8 may therefore play a role in the regulation of apoptosis. Required for normal embryonic development. This chain is Peptidyl-prolyl cis-trans isomerase FKBP8 (Fkbp8), found in Mus musculus (Mouse).